The sequence spans 119 residues: Small ribosomal subunit protein uS13m (119 aa).

It belongs to the universal ribosomal protein uS13 family. As to quaternary structure, part of the small ribosomal subunit.

It localises to the mitochondrion. Its function is as follows. Located at the top of the head of the small subunit, it contacts several helices of the small subunit rRNA. The sequence is that of Small ribosomal subunit protein uS13m (RPS13) from Prototheca wickerhamii.